We begin with the raw amino-acid sequence, 541 residues long: Chaperonin GroEL 2 (541 aa).

Residues 29-32 (TLGP), 86-90 (DGTTT), G413, and D492 each bind ATP.

Belongs to the chaperonin (HSP60) family. Forms a cylinder of 14 subunits composed of two heptameric rings stacked back-to-back. Interacts with the co-chaperonin GroES.

The protein resides in the cytoplasm. The enzyme catalyses ATP + H2O + a folded polypeptide = ADP + phosphate + an unfolded polypeptide.. In terms of biological role, together with its co-chaperonin GroES, plays an essential role in assisting protein folding. The GroEL-GroES system forms a nano-cage that allows encapsulation of the non-native substrate proteins and provides a physical environment optimized to promote and accelerate protein folding. This Acidothermus cellulolyticus (strain ATCC 43068 / DSM 8971 / 11B) protein is Chaperonin GroEL 2.